The sequence spans 375 residues: MAIVSSKQSPQPDGSKKPSQAKSVKKSVEHSKPQQTDALLQPEAVQEEFVGKQDDKLRPQRFDEYIGQRELKEVLDIAIQATKSRQEALDHLLLYGPPGLGKTTISLILAAELGVNCKVTSAPALERPRDIVGLLVNLQPRDILFIDEIHRLSRMTEELLYPAMEDFRLDITIGKGQSARIRSLPLKPFTLVGATTRVGALTSPLRDRFGFVQRLRFYEADELGQIVLRTADILKAKITSDAAEEVARRSRGTPRIANRLLKRVRDYAEVKHSGEITQTIAQEALELFNVDPCGLDWTDRRLLTVMIEQYNGGPVGVDTLAAATGEDSQTIEEVYEPYLMQIGYLNRTPRGRVATPAAWTHLGYQPPDEQMRLLS.

Over residues 1-22 (MAIVSSKQSPQPDGSKKPSQAK) the composition is skewed to polar residues. Residues 1–44 (MAIVSSKQSPQPDGSKKPSQAKSVKKSVEHSKPQQTDALLQPEA) are disordered. The large ATPase domain (RuvB-L) stretch occupies residues 13 to 218 (DGSKKPSQAK…FGFVQRLRFY (206 aa)). ATP-binding positions include Leu-57, Arg-58, Gly-99, Lys-102, Thr-103, Thr-104, 165–167 (EDF), Arg-208, Tyr-218, and Arg-255. Thr-103 lines the Mg(2+) pocket. The segment at 219–289 (EADELGQIVL…IAQEALELFN (71 aa)) is small ATPAse domain (RuvB-S). Residues 292–375 (PCGLDWTDRR…PPDEQMRLLS (84 aa)) form a head domain (RuvB-H) region. DNA contacts are provided by Arg-347 and Arg-352.

Belongs to the RuvB family. Homohexamer. Forms an RuvA(8)-RuvB(12)-Holliday junction (HJ) complex. HJ DNA is sandwiched between 2 RuvA tetramers; dsDNA enters through RuvA and exits via RuvB. An RuvB hexamer assembles on each DNA strand where it exits the tetramer. Each RuvB hexamer is contacted by two RuvA subunits (via domain III) on 2 adjacent RuvB subunits; this complex drives branch migration. In the full resolvosome a probable DNA-RuvA(4)-RuvB(12)-RuvC(2) complex forms which resolves the HJ.

Its subcellular location is the cytoplasm. It catalyses the reaction ATP + H2O = ADP + phosphate + H(+). Its function is as follows. The RuvA-RuvB-RuvC complex processes Holliday junction (HJ) DNA during genetic recombination and DNA repair, while the RuvA-RuvB complex plays an important role in the rescue of blocked DNA replication forks via replication fork reversal (RFR). RuvA specifically binds to HJ cruciform DNA, conferring on it an open structure. The RuvB hexamer acts as an ATP-dependent pump, pulling dsDNA into and through the RuvAB complex. RuvB forms 2 homohexamers on either side of HJ DNA bound by 1 or 2 RuvA tetramers; 4 subunits per hexamer contact DNA at a time. Coordinated motions by a converter formed by DNA-disengaged RuvB subunits stimulates ATP hydrolysis and nucleotide exchange. Immobilization of the converter enables RuvB to convert the ATP-contained energy into a lever motion, pulling 2 nucleotides of DNA out of the RuvA tetramer per ATP hydrolyzed, thus driving DNA branch migration. The RuvB motors rotate together with the DNA substrate, which together with the progressing nucleotide cycle form the mechanistic basis for DNA recombination by continuous HJ branch migration. Branch migration allows RuvC to scan DNA until it finds its consensus sequence, where it cleaves and resolves cruciform DNA. In Acaryochloris marina (strain MBIC 11017), this protein is Holliday junction branch migration complex subunit RuvB.